Here is an 88-residue protein sequence, read N- to C-terminus: Long neurotoxin 20 (88 aa).

Residues 1–21 (MKTLLLTLVVVTIVCLDLGNS) form the signal peptide. Intrachain disulfides connect Cys24–Cys42, Cys35–Cys63, Cys48–Cys52, Cys67–Cys78, and Cys79–Cys84.

The protein belongs to the three-finger toxin family. Long-chain subfamily. Type II alpha-neurotoxin sub-subfamily. As to expression, expressed by the venom gland.

It localises to the secreted. In terms of biological role, binds with high affinity to muscular (alpha-1/CHRNA1) and neuronal (alpha-7/CHRNA7) nicotinic acetylcholine receptor (nAChR) and inhibits acetylcholine from binding to the receptor, thereby impairing neuromuscular and neuronal transmission. The chain is Long neurotoxin 20 from Drysdalia coronoides (White-lipped snake).